A 998-amino-acid chain; its full sequence is Beta-galactosidase (998 aa).

Glu431 acts as the Proton donor in catalysis. The active-site Nucleophile is Glu508.

Belongs to the glycosyl hydrolase 2 family.

It catalyses the reaction Hydrolysis of terminal non-reducing beta-D-galactose residues in beta-D-galactosides.. This Lactococcus lactis subsp. lactis (strain IL1403) (Streptococcus lactis) protein is Beta-galactosidase (lacZ).